The primary structure comprises 137 residues: Nucleoside diphosphate kinase (137 aa).

ATP contacts are provided by Lys9, Phe57, Arg85, Thr91, Arg102, and Asn112. His115 serves as the catalytic Pros-phosphohistidine intermediate.

The protein belongs to the NDK family. As to quaternary structure, homotetramer. The cofactor is Mg(2+).

It is found in the cytoplasm. It carries out the reaction a 2'-deoxyribonucleoside 5'-diphosphate + ATP = a 2'-deoxyribonucleoside 5'-triphosphate + ADP. The enzyme catalyses a ribonucleoside 5'-diphosphate + ATP = a ribonucleoside 5'-triphosphate + ADP. Functionally, major role in the synthesis of nucleoside triphosphates other than ATP. The ATP gamma phosphate is transferred to the NDP beta phosphate via a ping-pong mechanism, using a phosphorylated active-site intermediate. The chain is Nucleoside diphosphate kinase from Leptospira borgpetersenii serovar Hardjo-bovis (strain L550).